We begin with the raw amino-acid sequence, 245 residues long: Small ribosomal subunit protein uS2 (245 aa).

Belongs to the universal ribosomal protein uS2 family.

The protein is Small ribosomal subunit protein uS2 of Dehalococcoides mccartyi (strain ATCC BAA-2266 / KCTC 15142 / 195) (Dehalococcoides ethenogenes (strain 195)).